Here is a 403-residue protein sequence, read N- to C-terminus: Lipid droplet-regulating VLDL assembly factor AUP1 (403 aa).

Residues 1–21 (MEQPSVESLLELRRFPRKQLS) are Cytoplasmic-facing. An intramembrane segment occupies 22–42 (LILLLLYSPLGLCLFLIRLFI). At 43–399 (GAHVFLVSCV…GSVGREEEEK (357 aa)) the chain is on the cytoplasmic side. The 43-residue stretch at 286 to 328 (TQMQMAQHVKEVLPQVPLSAIHRDLGHTGCIDTTITNFLEGRV) folds into the CUE domain.

This sequence belongs to the AUP1 family.

Its subcellular location is the endoplasmic reticulum membrane. The protein localises to the lipid droplet. In terms of biological role, plays a role in the translocation of terminally misfolded proteins from the endoplasmic reticulum lumen to the cytoplasm and their degradation by the proteasome. Plays a role in lipid droplet formation. Induces lipid droplet clustering. The chain is Lipid droplet-regulating VLDL assembly factor AUP1 from Xenopus tropicalis (Western clawed frog).